Reading from the N-terminus, the 36-residue chain is Photosystem I reaction center subunit VIII (36 aa).

A helical membrane pass occupies residues 9-29; the sequence is ILVPLVGLIFPAIAMTSLFIY.

This sequence belongs to the PsaI family.

Its subcellular location is the plastid. It is found in the chloroplast thylakoid membrane. Its function is as follows. May help in the organization of the PsaL subunit. The sequence is that of Photosystem I reaction center subunit VIII from Tupiella akineta (Green alga).